We begin with the raw amino-acid sequence, 23 residues long: Apolipophorin-1 (23 aa).

Basic and acidic residues predominate over residues 1-15; the sequence is SVKSEVDNFDKHLKA. Residues 1–23 form a disordered region; it reads SVKSEVDNFDKHLKAESAPFNNE.

Expressed in hemolymph.

It localises to the secreted. Its function is as follows. Constitutes the major component of lipophorin, which mediates transport for various types of lipids in hemolymph. Acts by forming lipoprotein particles that bind lipoproteins and lipids. This chain is Apolipophorin-1, found in Galleria mellonella (Greater wax moth).